Reading from the N-terminus, the 210-residue chain is Inner membrane-spanning protein YciB (210 aa).

6 consecutive transmembrane segments (helical) span residues 12 to 32 (EVSPLLKLVLELGPLMVFFFA), 53 to 73 (IFIATGLFMAATAAALAVSWM), 78 to 98 (LPMMPLISGIVVFVFGALTLW), 115 to 135 (LFGAILLGGLLFGKSLLGYVF), 153 to 173 (WGVFFLFLAVLNEVIWRSFST), and 175 to 195 (FWVAFKVWGTMPITILFTLAQ).

The protein belongs to the YciB family.

The protein resides in the cell inner membrane. In terms of biological role, plays a role in cell envelope biogenesis, maintenance of cell envelope integrity and membrane homeostasis. This is Inner membrane-spanning protein YciB from Sinorhizobium medicae (strain WSM419) (Ensifer medicae).